Here is a 123-residue protein sequence, read N- to C-terminus: uncharacterized protein (123 aa).

The span at 1 to 12 (MALNNVSLSSGD) shows a compositional bias: polar residues. Disordered regions lie at residues 1-25 (MALN…SHGD) and 53-91 (PRQA…RFSP). Residues 61-82 (VRAESRRVDGGGRSPREPDGRG) are compositionally biased toward basic and acidic residues.

This is an uncharacterized protein from Homo sapiens (Human).